We begin with the raw amino-acid sequence, 632 residues long: 2-oxoacid:ferredoxin oxidoreductase subunit alpha (632 aa).

A YPITP motif motif is present at residues 253–257 (YPITP). Positions 256 and 344 each coordinate substrate.

In terms of assembly, heterodimer composed of an alpha and a beta subunit.

It is found in the cytoplasm. It catalyses the reaction a 2-oxocarboxylate + 2 oxidized [2Fe-2S]-[ferredoxin] + CoA = an acyl-CoA + 2 reduced [2Fe-2S]-[ferredoxin] + CO2 + H(+). Functionally, catalyzes the coenzyme A-dependent oxidative decarboxylation of different 2-oxoacids such as 2-oxoglutarate, pyruvate and 2-oxobutyrate to form their CoA derivatives. The polypeptide is 2-oxoacid:ferredoxin oxidoreductase subunit alpha (Sulfolobus sp).